The sequence spans 184 residues: Large ribosomal subunit protein uL5c (184 aa).

The protein belongs to the universal ribosomal protein uL5 family. Part of the 50S ribosomal subunit; contacts the 5S rRNA.

It localises to the plastid. The protein resides in the chloroplast. Binds 5S rRNA, forms part of the central protuberance of the 50S subunit. This Mesostigma viride (Green alga) protein is Large ribosomal subunit protein uL5c (rpl5).